A 402-amino-acid chain; its full sequence is Olfactomedin-like protein 1 (402 aa).

An N-terminal signal peptide occupies residues M1–D28. N66 carries N-linked (GlcNAc...) asparagine glycosylation. A coiled-coil region spans residues R73–T135. N138 and N183 each carry an N-linked (GlcNAc...) asparagine glycan. In terms of domain architecture, Olfactomedin-like spans S140–K397. A disulfide bridge connects residues C141 and C324.

Highly N-glycosylated.

Its subcellular location is the secreted. The chain is Olfactomedin-like protein 1 (Olfml1) from Rattus norvegicus (Rat).